The following is a 232-amino-acid chain: MSVVTMKQLLEAGVHFGHQTRRWNPKMATYIYMERNGIYIIDLQQTVKKFDAAYEFVKSVAAAGKGVLFVGTKKQAQETIREEASRCGMYFVNQRWLGGMLTNYKTIKRRVLRLKELEKQEAEGAFEVLSKKEVARLLNERERLERFLGGIKEMDKLPGAVFVVDPRKERIAVAEARKLNIPVVAIVDTNCDPDEIDYVIPGNDDAIRAVKLISSRIADAVLEGKQGEQITT.

Belongs to the universal ribosomal protein uS2 family.

This chain is Small ribosomal subunit protein uS2, found in Syntrophomonas wolfei subsp. wolfei (strain DSM 2245B / Goettingen).